We begin with the raw amino-acid sequence, 377 residues long: N5-carboxyaminoimidazole ribonucleotide synthase (377 aa).

ATP is bound by residues Arg93, Lys133, 138–144 (GYDGKGQ), 175–178 (EEFV), Glu183, His206, and 257–258 (NE). Residues 97 to 287 (KALLDRAQVA…QFENHLRAVC (191 aa)) enclose the ATP-grasp domain.

This sequence belongs to the PurK/PurT family. Homodimer.

The enzyme catalyses 5-amino-1-(5-phospho-beta-D-ribosyl)imidazole + hydrogencarbonate + ATP = 5-carboxyamino-1-(5-phospho-D-ribosyl)imidazole + ADP + phosphate + 2 H(+). Its pathway is purine metabolism; IMP biosynthesis via de novo pathway; 5-amino-1-(5-phospho-D-ribosyl)imidazole-4-carboxylate from 5-amino-1-(5-phospho-D-ribosyl)imidazole (N5-CAIR route): step 1/2. Its function is as follows. Catalyzes the ATP-dependent conversion of 5-aminoimidazole ribonucleotide (AIR) and HCO(3)(-) to N5-carboxyaminoimidazole ribonucleotide (N5-CAIR). The sequence is that of N5-carboxyaminoimidazole ribonucleotide synthase from Vibrio cholerae serotype O1 (strain ATCC 39315 / El Tor Inaba N16961).